Reading from the N-terminus, the 370-residue chain is MQQDKVNLLGLNQKAIEDFFISIGEKKFHARQVFKWIHKKGVIDFDAMTDLGKNLRHKLKEKAQITIPKVVFSKASKDGTHKWLIDVGGSAVETVFILEEGRGTLCVSSQVGCTLNCSFCSTGKQGFNRNLSAAEVIAQLWIAARTLSKTDGEHDFTVTNIVMMGMGEPLMNFENVVPAMDIMMDDLAYGLSRRKVTLSTSGVVPRIYDLLEQSGVSLAVSLHAPNDMLRNEIVPINKKYNIDELLEACKLYAQKGPHKHITFEYTLMEEVNDNLSDAEELVALLKSREVPAKINLIPFNPYPGTPYKKPSNNRIHRFKEFLQHNGFVTTVRKTRGDDIDAACGQLAGDVMDKTNRKQRYLKKLGDTNAN.

Glu-93 (proton acceptor) is an active-site residue. The 239-residue stretch at 99–337 (EEGRGTLCVS…VTTVRKTRGD (239 aa)) folds into the Radical SAM core domain. Residues Cys-106 and Cys-343 are joined by a disulfide bond. [4Fe-4S] cluster contacts are provided by Cys-113, Cys-117, and Cys-120. Residues 167–168 (GE), Ser-199, 221–223 (SLH), and Asn-300 contribute to the S-adenosyl-L-methionine site. Catalysis depends on Cys-343, which acts as the S-methylcysteine intermediate.

The protein belongs to the radical SAM superfamily. RlmN family. Requires [4Fe-4S] cluster as cofactor.

The protein localises to the cytoplasm. It catalyses the reaction adenosine(2503) in 23S rRNA + 2 reduced [2Fe-2S]-[ferredoxin] + 2 S-adenosyl-L-methionine = 2-methyladenosine(2503) in 23S rRNA + 5'-deoxyadenosine + L-methionine + 2 oxidized [2Fe-2S]-[ferredoxin] + S-adenosyl-L-homocysteine. The enzyme catalyses adenosine(37) in tRNA + 2 reduced [2Fe-2S]-[ferredoxin] + 2 S-adenosyl-L-methionine = 2-methyladenosine(37) in tRNA + 5'-deoxyadenosine + L-methionine + 2 oxidized [2Fe-2S]-[ferredoxin] + S-adenosyl-L-homocysteine. Specifically methylates position 2 of adenine 2503 in 23S rRNA and position 2 of adenine 37 in tRNAs. m2A2503 modification seems to play a crucial role in the proofreading step occurring at the peptidyl transferase center and thus would serve to optimize ribosomal fidelity. This chain is Dual-specificity RNA methyltransferase RlmN, found in Francisella tularensis subsp. tularensis (strain WY96-3418).